The primary structure comprises 123 residues: Ribosome-binding factor A (123 aa).

Belongs to the RbfA family. As to quaternary structure, monomer. Binds 30S ribosomal subunits, but not 50S ribosomal subunits or 70S ribosomes.

It localises to the cytoplasm. Functionally, one of several proteins that assist in the late maturation steps of the functional core of the 30S ribosomal subunit. Associates with free 30S ribosomal subunits (but not with 30S subunits that are part of 70S ribosomes or polysomes). Required for efficient processing of 16S rRNA. May interact with the 5'-terminal helix region of 16S rRNA. The chain is Ribosome-binding factor A from Lactobacillus gasseri (strain ATCC 33323 / DSM 20243 / BCRC 14619 / CIP 102991 / JCM 1131 / KCTC 3163 / NCIMB 11718 / NCTC 13722 / AM63).